The primary structure comprises 453 residues: 3-phosphoshikimate 1-carboxyvinyltransferase (453 aa).

Positions 28, 29, and 33 each coordinate 3-phosphoshikimate. K28 is a binding site for phosphoenolpyruvate. 2 residues coordinate phosphoenolpyruvate: G101 and R129. 3-phosphoshikimate contacts are provided by S174, Q176, D326, and K353. Q176 lines the phosphoenolpyruvate pocket. D326 acts as the Proton acceptor in catalysis. R357 and R405 together coordinate phosphoenolpyruvate.

It belongs to the EPSP synthase family. Monomer.

It is found in the cytoplasm. It catalyses the reaction 3-phosphoshikimate + phosphoenolpyruvate = 5-O-(1-carboxyvinyl)-3-phosphoshikimate + phosphate. Its pathway is metabolic intermediate biosynthesis; chorismate biosynthesis; chorismate from D-erythrose 4-phosphate and phosphoenolpyruvate: step 6/7. Functionally, catalyzes the transfer of the enolpyruvyl moiety of phosphoenolpyruvate (PEP) to the 5-hydroxyl of shikimate-3-phosphate (S3P) to produce enolpyruvyl shikimate-3-phosphate and inorganic phosphate. The polypeptide is 3-phosphoshikimate 1-carboxyvinyltransferase (Zymomonas mobilis subsp. mobilis (strain ATCC 31821 / ZM4 / CP4)).